Consider the following 590-residue polypeptide: Putative sodium/calcium exchanger 6 (590 aa).

A signal peptide spans 1–19; that stretch reads MRIHFFAFLIILSLVGCDG. 11 helical membrane passes run 97-117, 139-159, 173-193, 208-228, 230-250, 368-388, 397-417, 440-460, 499-519, 535-555, and 568-588; these read IILIITGVIYMLVLFIMVSSA, VAGVTFMAFGNGAPDVFGAIA, LGELFGAGLFVTTMVLAVTIF, IAFYLVALAFLAFCFVYYDHV, IWMPITFLGVYLIYVCTVILS, PITLLQCLICPVFLLFCIQVC, PGLWMYGLILSVLLTAAVLFF, IAWIYLISSEVVNVVTMLGVV, AAAIGGQLFNLLIGFGLPFTI, YRLLMLFLAISLIFTLIAMFA, and LVFIYISFFVFIGLSLDDILV.

This sequence belongs to the Ca(2+):cation antiporter (CaCA) (TC 2.A.19) family.

The protein localises to the membrane. This Caenorhabditis elegans protein is Putative sodium/calcium exchanger 6 (ncx-6).